Here is an 822-residue protein sequence, read N- to C-terminus: Serine/threonine-protein kinase kin-29 (822 aa).

The Protein kinase domain occupies 16 to 267; the sequence is YDVGRAIGKG…IQNVLQHRWM (252 aa). Residues 22 to 30 and K45 contribute to the ATP site; that span reads IGKGNFATV. The active-site Proton acceptor is the D138. 3 disordered regions span residues 348-367, 389-423, and 577-602; these read EGTG…LSGK, LSSP…RQFG, and NPIP…WASP. Residues 394–406 are compositionally biased toward acidic residues; it reads CDSDDSSNSDLCD.

The protein belongs to the protein kinase superfamily. CAMK Ser/Thr protein kinase family. SNF1 subfamily. Interacts with tax-6. The cofactor is Mg(2+). Autophosphorylated. Elevated cAMP levels appears to act via PKA to directly or indirectly phosphorylate multiple sites on kin-29 and inhibit function. In terms of tissue distribution, primarily neuronal, with additional expression in body wall muscle and hypodermal cells. Among neuronal cells, expressed in multiple sensory neurons and interneurons in the lateral, anterior, and lumbar ganglia, as well as in motor neurons in the ventral motor cord. Present in the AWB and AWC olfactory neurons.

It is found in the cytoplasm. The protein localises to the nucleus. It carries out the reaction L-seryl-[protein] + ATP = O-phospho-L-seryl-[protein] + ADP + H(+). The enzyme catalyses L-threonyl-[protein] + ATP = O-phospho-L-threonyl-[protein] + ADP + H(+). Its function is as follows. Regulates chemoreceptor expression by phosphorylating the hda-4 class II histone deacetylase (HDAC) and inhibiting the gene repression functions of hda-4 and the mef-2 transcription factor, enabling the correct sensing and transduction of food signals. Role in determining body size, the dauer decision and serotonin-mediated egg laying. May modulate the Sma/Mab pathway and regulates development in the later larval stages. The protein is Serine/threonine-protein kinase kin-29 of Caenorhabditis elegans.